Here is a 232-residue protein sequence, read N- to C-terminus: Chaperone protein LpfB (232 aa).

Residues 1-23 form the signal peptide; that stretch reads MNRSRLISCTALVLALIAQNSFA.

This sequence belongs to the periplasmic pilus chaperone family.

The protein resides in the periplasm. In terms of biological role, required for the biogenesis of long polar fimbria; binds and interact with LpfA. This chain is Chaperone protein LpfB (lpfB), found in Salmonella typhimurium (strain LT2 / SGSC1412 / ATCC 700720).